The primary structure comprises 399 residues: Trimethyllysine dioxygenase (399 aa).

Positions 214, 216, and 360 each coordinate Fe cation.

The protein belongs to the gamma-BBH/TMLD family. Requires Fe(2+) as cofactor. L-ascorbate serves as cofactor.

It is found in the cytoplasm. It carries out the reaction N(6),N(6),N(6)-trimethyl-L-lysine + 2-oxoglutarate + O2 = (3S)-3-hydroxy-N(6),N(6),N(6)-trimethyl-L-lysine + succinate + CO2. Its pathway is amine and polyamine biosynthesis; carnitine biosynthesis. Functionally, converts trimethyllysine (TML) into hydroxytrimethyllysine (HTML). The polypeptide is Trimethyllysine dioxygenase (Meyerozyma guilliermondii (strain ATCC 6260 / CBS 566 / DSM 6381 / JCM 1539 / NBRC 10279 / NRRL Y-324) (Yeast)).